The chain runs to 286 residues: 4-diphosphocytidyl-2-C-methyl-D-erythritol kinase (286 aa).

Residue Lys-11 is part of the active site. ATP is bound at residue Pro-93–Ser-103. Residue Asp-135 is part of the active site.

This sequence belongs to the GHMP kinase family. IspE subfamily.

The enzyme catalyses 4-CDP-2-C-methyl-D-erythritol + ATP = 4-CDP-2-C-methyl-D-erythritol 2-phosphate + ADP + H(+). It participates in isoprenoid biosynthesis; isopentenyl diphosphate biosynthesis via DXP pathway; isopentenyl diphosphate from 1-deoxy-D-xylulose 5-phosphate: step 3/6. Its function is as follows. Catalyzes the phosphorylation of the position 2 hydroxy group of 4-diphosphocytidyl-2C-methyl-D-erythritol. The sequence is that of 4-diphosphocytidyl-2-C-methyl-D-erythritol kinase from Chlorobium phaeobacteroides (strain BS1).